Here is a 229-residue protein sequence, read N- to C-terminus: Putative N-acetylmannosamine-6-phosphate 2-epimerase (229 aa).

This sequence belongs to the NanE family.

The catalysed reaction is an N-acyl-D-glucosamine 6-phosphate = an N-acyl-D-mannosamine 6-phosphate. It participates in amino-sugar metabolism; N-acetylneuraminate degradation; D-fructose 6-phosphate from N-acetylneuraminate: step 3/5. Converts N-acetylmannosamine-6-phosphate (ManNAc-6-P) to N-acetylglucosamine-6-phosphate (GlcNAc-6-P). This chain is Putative N-acetylmannosamine-6-phosphate 2-epimerase, found in Escherichia coli O157:H7.